Consider the following 488-residue polypeptide: Adenylosuccinate synthetase 1, chloroplastic (488 aa).

A chloroplast-targeting transit peptide spans methionine 1–serine 47. Residues glycine 75–lysine 81 and glycine 103–threonine 105 contribute to the GTP site. The active-site Proton acceptor is the aspartate 76. Mg(2+) is bound by residues aspartate 76 and glycine 103. IMP is bound by residues aspartate 76–lysine 79, asparagine 101–histidine 104, threonine 193, arginine 207, glutamine 287, threonine 302, and arginine 366. Histidine 104 serves as the catalytic Proton donor. A substrate-binding site is contributed by threonine 362–arginine 368. GTP-binding positions include arginine 368, lysine 394 to aspartate 396, and glycine 477 to glycine 479.

It belongs to the adenylosuccinate synthetase family. As to quaternary structure, homodimer. Mg(2+) is required as a cofactor.

It is found in the plastid. The protein localises to the chloroplast. The enzyme catalyses IMP + L-aspartate + GTP = N(6)-(1,2-dicarboxyethyl)-AMP + GDP + phosphate + 2 H(+). It functions in the pathway purine metabolism; AMP biosynthesis via de novo pathway; AMP from IMP: step 1/2. Functionally, plays an important role in the de novo pathway and in the salvage pathway of purine nucleotide biosynthesis. Catalyzes the first committed step in the biosynthesis of AMP from IMP. This is Adenylosuccinate synthetase 1, chloroplastic from Oryza sativa subsp. japonica (Rice).